Reading from the N-terminus, the 145-residue chain is Putative BCoR-like protein 2 (145 aa).

A compositionally biased stretch (basic and acidic residues) spans 1 to 27 (MKEKLSKKRAEVKGNRSWLEEFLKPSD). The interval 1–58 (MKEKLSKKRAEVKGNRSWLEEFLKPSDNEEGPPPKNKVLSNNASSQKPTHSSCIPLLR) is disordered. Positions 38 to 52 (VLSNNASSQKPTHSS) are enriched in polar residues.

This sequence belongs to the BCOR family.

The polypeptide is Putative BCoR-like protein 2 (BCORP1) (Homo sapiens (Human)).